The following is a 196-amino-acid chain: NADH-quinone oxidoreductase subunit I (196 aa).

2 4Fe-4S ferredoxin-type domains span residues 54–84 (LNRW…VEGA) and 104–133 (RVYQ…MTNE). 8 residues coordinate [4Fe-4S] cluster: cysteine 64, cysteine 67, cysteine 70, cysteine 74, cysteine 113, cysteine 116, cysteine 119, and cysteine 123.

Belongs to the complex I 23 kDa subunit family. NDH-1 is composed of 14 different subunits. Subunits NuoA, H, J, K, L, M, N constitute the membrane sector of the complex. Requires [4Fe-4S] cluster as cofactor.

The protein resides in the cell membrane. It catalyses the reaction a quinone + NADH + 5 H(+)(in) = a quinol + NAD(+) + 4 H(+)(out). NDH-1 shuttles electrons from NADH, via FMN and iron-sulfur (Fe-S) centers, to quinones in the respiratory chain. The immediate electron acceptor for the enzyme in this species is believed to be ubiquinone. Couples the redox reaction to proton translocation (for every two electrons transferred, four hydrogen ions are translocated across the cytoplasmic membrane), and thus conserves the redox energy in a proton gradient. The protein is NADH-quinone oxidoreductase subunit I of Nocardioides sp. (strain ATCC BAA-499 / JS614).